The following is a 509-amino-acid chain: Cytochrome P450 monooxygenase FUP2 (509 aa).

Helical transmembrane passes span 16–36 (FGLALVISALALVSVIIYGCF) and 224–244 (MVEALSFFLTLPGIASVFGIA). Cysteine 450 contacts heme.

The protein belongs to the cytochrome P450 family. It depends on heme as a cofactor.

The protein resides in the membrane. It participates in secondary metabolite biosynthesis. Cytochrome P450 monooxygenase; part of the gene cluster that mediates the biosynthesis of the mycotoxin fusaproliferin (FUP) that belongs to the class of bicyclic sesterterpenoids. FUP2 introduces a hydroxyl group at the C-24 position resulting in the formation of preterpestacin IIa, which can be further oxidized. The oxidation of the hydroxyl group at C-24 to an aldehyde and further to a carboxylic group takes place via unspecific alcohol and aldehyde dehydrogenases and leads to the shunt products preterpestacin IIc and preterpestacin IIb, respectively. The FUP biosynthetic pathway starts with the enzyme encoded by FUP1 that combines a C-terminal prenyltransferase domain responsible for the synthesis of geranylgeranyl diphosphate with the N-terminal terpene cyclase domain, to yield preterpestacin I. Preterpestacin I is then decorated by oxygenation steps that are catalyzed by two cytochrome P450 monooxygenases. First, FUP2 introduces a hydroxyl group at the C-24 position resulting in the formation of preterpestacin IIa. The second P450 monooxygenase catalyzes the hydroxylation at C-16 and C-17 of preterpestacin IIa, producing preterpestacin III. Subsequently, the FAD-dependent oxidoreductase FUP4 catalyzes the oxidation of the hydroxy group at the C-16 position to a keto group, leading to the formation of (-)-terpestacin, which is the immediate precursor of FUP. The final step in the proposed biosynthetic pathway is the addition of an acetyl group at the C-24 position of terpestacin, which is catalyzed by the acetyltransferase FUP5. The sequence is that of Cytochrome P450 monooxygenase FUP2 from Fusarium proliferatum (strain ET1) (Orchid endophyte fungus).